We begin with the raw amino-acid sequence, 358 residues long: Uroporphyrinogen decarboxylase (358 aa).

Substrate is bound by residues 29–33 (RQAGR), Phe-48, Asp-79, Tyr-155, Ser-210, and His-330.

It belongs to the uroporphyrinogen decarboxylase family. Homodimer.

It is found in the cytoplasm. It catalyses the reaction uroporphyrinogen III + 4 H(+) = coproporphyrinogen III + 4 CO2. It functions in the pathway porphyrin-containing compound metabolism; protoporphyrin-IX biosynthesis; coproporphyrinogen-III from 5-aminolevulinate: step 4/4. Its function is as follows. Catalyzes the decarboxylation of four acetate groups of uroporphyrinogen-III to yield coproporphyrinogen-III. The protein is Uroporphyrinogen decarboxylase of Bordetella parapertussis (strain 12822 / ATCC BAA-587 / NCTC 13253).